The sequence spans 474 residues: Probable threonine--tRNA ligase, mitochondrial (474 aa).

The transit peptide at Met1–Phe27 directs the protein to the mitochondrion.

Belongs to the class-II aminoacyl-tRNA synthetase family.

It is found in the mitochondrion matrix. The catalysed reaction is tRNA(Thr) + L-threonine + ATP = L-threonyl-tRNA(Thr) + AMP + diphosphate + H(+). This Schizosaccharomyces pombe (strain 972 / ATCC 24843) (Fission yeast) protein is Probable threonine--tRNA ligase, mitochondrial.